The sequence spans 520 residues: DNA mismatch repair protein MutL (520 aa).

The protein belongs to the DNA mismatch repair MutL/HexB family.

This protein is involved in the repair of mismatches in DNA. It is required for dam-dependent methyl-directed DNA mismatch repair. May act as a 'molecular matchmaker', a protein that promotes the formation of a stable complex between two or more DNA-binding proteins in an ATP-dependent manner without itself being part of a final effector complex. The chain is DNA mismatch repair protein MutL from Persephonella marina (strain DSM 14350 / EX-H1).